A 247-amino-acid polypeptide reads, in one-letter code: Adenosine 5'-phosphosulfate reductase (247 aa).

Residues cysteine 133, cysteine 134, cysteine 216, and cysteine 219 each coordinate [4Fe-4S] cluster. Residues lysine 222–serine 247 form a disordered region. The active-site Nucleophile; cysteine thiosulfonate intermediate is cysteine 242.

It belongs to the PAPS reductase family. CysH subfamily. [4Fe-4S] cluster is required as a cofactor.

The protein resides in the cytoplasm. The catalysed reaction is [thioredoxin]-disulfide + sulfite + AMP + 2 H(+) = adenosine 5'-phosphosulfate + [thioredoxin]-dithiol. It functions in the pathway sulfur metabolism; hydrogen sulfide biosynthesis; sulfite from sulfate. Its function is as follows. Catalyzes the formation of sulfite from adenosine 5'-phosphosulfate (APS) using thioredoxin as an electron donor. The sequence is that of Adenosine 5'-phosphosulfate reductase from Rhodococcus erythropolis (strain PR4 / NBRC 100887).